The following is a 297-amino-acid chain: Lymphocyte antigen 6 complex locus protein G6f (297 aa).

The first 16 residues, methionine 1–alanine 16, serve as a signal peptide directing secretion. The 106-residue stretch at alanine 17–aspartate 122 folds into the Ig-like V-type domain. The Extracellular segment spans residues alanine 17–tryptophan 235. Cysteines 35 and 106 form a disulfide. N-linked (GlcNAc...) asparagine glycosylation is present at asparagine 88. The chain crosses the membrane as a helical span at residues isoleucine 236–leucine 256. The Cytoplasmic segment spans residues tryptophan 257–arginine 297. At tyrosine 281 the chain carries Phosphotyrosine.

Homodimer; disulfide-linked. Interacts with GRB2 and GRB7 in a phosphorylation-dependent manner. N-glycosylated.

It localises to the cell membrane. Functionally, may play a role in the downstream signal transduction pathways involving GRB2 and GRB7. In Homo sapiens (Human), this protein is Lymphocyte antigen 6 complex locus protein G6f (LY6G6F).